Consider the following 184-residue polypeptide: Large ribosomal subunit protein uL15 (184 aa).

A disordered region spans residues 1–50 (MDLSSLRPAKGAVKNKKRVGRGQGSGNGTTAGKGNKGQQARSGYKRPINE). Gly residues predominate over residues 21 to 35 (RGQGSGNGTTAGKGN).

It belongs to the universal ribosomal protein uL15 family. In terms of assembly, part of the 50S ribosomal subunit.

Its function is as follows. Binds to the 23S rRNA. This chain is Large ribosomal subunit protein uL15, found in Chlorobium luteolum (strain DSM 273 / BCRC 81028 / 2530) (Pelodictyon luteolum).